The primary structure comprises 434 residues: Citrate synthase (434 aa).

Catalysis depends on residues H310 and D368.

Belongs to the citrate synthase family.

The enzyme catalyses oxaloacetate + acetyl-CoA + H2O = citrate + CoA + H(+). It participates in carbohydrate metabolism; tricarboxylic acid cycle; isocitrate from oxaloacetate: step 1/2. The protein is Citrate synthase (gltA) of Bradyrhizobium diazoefficiens (strain JCM 10833 / BCRC 13528 / IAM 13628 / NBRC 14792 / USDA 110).